Here is a 1369-residue protein sequence, read N- to C-terminus: MTSSSPKTRKSSTKSKAKRGSKSKKAAEIKAVQRLSKTPPPFRNKVVDKKVLKNLVAWAFKHHGTAATAAMADNLKDLGFRYATQAAVSISVDDLKVPEAKQDLLGQAEELITATEECYRLGEITEVERHTKVIDTWTETNERLVDAVKKNFNQNDPLNSVWMMANSGARGNMSQVRQLVGMRGLMANPQGEIIDLPIRTNFREGLTVTEYVISSYGARKGLVDTALRTADSGYLTRRLVDVAQDVIVREEDCGTTRSILISAEDGKFGNRLVGRLTSEQVVNADQEVLAERDTPIDPQLSKKFEQSNLQGVRVRSPLTCEATRSVCRKCYGWALAHNQLVDLGEAVGIVAAQSIGEPGTQLTMRTFHTGGVSTAETGVVRSTLSGKVEFGSKARVRGYRTPHGVEAQQAEVDFNLSIVPTSGSKPQKIDIPIGSLLFVDNGQNIDIDVTVAQIASGTVQKSVEKATKDVICDLAGQVRYETIIQPREVTDRQGNITLKAQRLGRLWVLAGDVYNLPPNALPVVSGNVSVKEGQVLAEASQASEFGGEVRLRDSIGDSREVQIVTTSMILNDFKLLEESTHSGEIWHLEAQDNTRYRLNTIPGSKIGNNEVIAELSDDRFKTETGGLIKYAPGLTIKKARSAKNGYEVSKGGTLLWIPQETHEINKDISLLMIKDRQWIEAGTEVVKDIFSQTAGIVTVTQKNDILREIIVRSGTFKLCKESKALDRFEGDGQIVNPGETIAKGIKTDSMVMVQSVETPEGKGLLLRSVEEFTIPDQAQLPELKHVKQPKGPSLGIKASQRLAYKDGELIKSVEGVELLKTQLMLETFDTTPQMTVDVEVIHDLNSKGDRLKLVILESILVRRDTTSDSSHGSTHTELQIENAQVVSAGDVVATTQILCKQEGVVQLPDAVDGDPVRRLIVERDEDTITIDSKGTTLLKVGQRVVDGDFVSKDQSIDACGEIENIDGKKVKLRLGRPYMVSPDSVLHVRDGDLVQRGDGLALLVFERQKTGDIVQGLPRIEELLEARRPRDSAILCKKSGTVDIKKGDDDDSVVVSIIEDNDVISEYPILLGRNVMVRNSQQVIAGEFLTDGPVNPHELLECFFTDLRDKKPLMDAAQEAIAKLQHRMVSEVQNVYKSQGVAIDDKHIEVIVRQMTSKVRIEDAGDTTFLPGELIELRQVEDTNQAISITGGAPSEFTPVLLGITKASLNTDSFISAASFQETTRVLTEAAIEGKSDWLRGLKENVIIGRLIPAGTGFSGFVEELNAEAGPHPDILAEDPAGYRRIQNLRPDYTVDMPSSPVAKNTAVLDDPSDEDLEATRSRHGIDPTTSNFAAFARPTGDDELSAEDQMPDPAALEGLQEEGLLSDE.

The interval 1-43 (MTSSSPKTRKSSTKSKAKRGSKSKKAAEIKAVQRLSKTPPPFR) is disordered. Positions 7 to 24 (KTRKSSTKSKAKRGSKSK) are enriched in basic residues. Zn(2+) contacts are provided by Cys-253, Cys-320, Cys-327, and Cys-330. Residues 1294 to 1369 (TVDMPSSPVA…LQEEGLLSDE (76 aa)) form a disordered region. Over residues 1342 to 1351 (DDELSAEDQM) the composition is skewed to acidic residues. A compositionally biased stretch (low complexity) spans 1357–1369 (LEGLQEEGLLSDE).

This sequence belongs to the RNA polymerase beta' chain family. RpoC2 subfamily. In terms of assembly, in cyanobacteria the RNAP catalytic core is composed of 2 alpha, 1 beta, 1 beta', 1 gamma and 1 omega subunit. When a sigma factor is associated with the core the holoenzyme is formed, which can initiate transcription. Requires Zn(2+) as cofactor.

It catalyses the reaction RNA(n) + a ribonucleoside 5'-triphosphate = RNA(n+1) + diphosphate. In terms of biological role, DNA-dependent RNA polymerase catalyzes the transcription of DNA into RNA using the four ribonucleoside triphosphates as substrates. This Prochlorococcus marinus (strain NATL1A) protein is DNA-directed RNA polymerase subunit beta'.